The following is a 309-amino-acid chain: MDLIILVGIASALLVVILTIFFLQKKKGGTEAKEAAAPPQRGVPLRAQEGVPRRAQIARNQRNRLRQNAPAAAPAAAAALQAADAEGDNDDENPDGDGQRMPQGAVLDEKMGAKKRAKMEAKEQKRLHREQELIDREQRKVKEAKEEAERKQQEDFQEEADRKRAEAERLVKEERERKEHEEYLKMKAGFSVEEEGFEEGDADDQDNLLADFIQYIKDNKVVLLEDLAVAFKLKTQQAIERIQDLQANGTLTGVIDDRGKFIYVSEEELAAVAKFIKQRGRVSIVELAESSNNLINLTPVSAGAGEGSS.

The Lumenal portion of the chain corresponds to 1 to 2; that stretch reads MD. Residues 3–23 traverse the membrane as a helical segment; the sequence is LIILVGIASALLVVILTIFFL. Over 24–309 the chain is Cytoplasmic; the sequence is QKKKGGTEAK…VSAGAGEGSS (286 aa). The interval 30 to 178 is disordered; it reads TEAKEAAAPP…RLVKEERERK (149 aa). Residues 53-84 are compositionally biased toward low complexity; sequence RRAQIARNQRNRLRQNAPAAAPAAAAALQAAD. A compositionally biased stretch (acidic residues) spans 85-95; that stretch reads AEGDNDDENPD. Over residues 107–178 the composition is skewed to basic and acidic residues; the sequence is LDEKMGAKKR…RLVKEERERK (72 aa).

It belongs to the DDRGK1 family. As to quaternary structure, interacts with Atg9; the interaction is transient.

It is found in the endoplasmic reticulum membrane. In terms of biological role, substrate adapter for ufmylation, the covalent attachment of the ubiquitin-like modifier UFM1 to substrate proteins. Required for ufmylation of Atg9; protects the nervous system during aging, possibly by stabilizing Atg9 and supporting its function. This Drosophila persimilis (Fruit fly) protein is DDRGK domain-containing protein 1.